Reading from the N-terminus, the 103-residue chain is Large ribosomal subunit protein bL21 (103 aa).

Belongs to the bacterial ribosomal protein bL21 family. As to quaternary structure, part of the 50S ribosomal subunit. Contacts protein L20.

Its function is as follows. This protein binds to 23S rRNA in the presence of protein L20. This chain is Large ribosomal subunit protein bL21, found in Aliivibrio fischeri (strain ATCC 700601 / ES114) (Vibrio fischeri).